Reading from the N-terminus, the 200-residue chain is Imidazoleglycerol-phosphate dehydratase (200 aa).

It belongs to the imidazoleglycerol-phosphate dehydratase family.

The protein localises to the cytoplasm. The enzyme catalyses D-erythro-1-(imidazol-4-yl)glycerol 3-phosphate = 3-(imidazol-4-yl)-2-oxopropyl phosphate + H2O. It participates in amino-acid biosynthesis; L-histidine biosynthesis; L-histidine from 5-phospho-alpha-D-ribose 1-diphosphate: step 6/9. The chain is Imidazoleglycerol-phosphate dehydratase from Leifsonia xyli subsp. xyli (strain CTCB07).